Reading from the N-terminus, the 60-residue chain is MNFNKLFALVLLIGLVLLTGQTEAGGLKKLGKKLEGVGKRVFKASEKALPVLTGYKAIGK.

The N-terminal stretch at 1–24 (MNFNKLFALVLLIGLVLLTGQTEA) is a signal peptide. Ile58 bears the Isoleucine amide mark.

The protein belongs to the cecropin family.

The protein resides in the secreted. Functionally, cecropins have lytic and antibacterial activity against several Gram-positive and Gram-negative bacteria. This chain is Cecropin-B type 1 (CECB1), found in Aedes albopictus (Asian tiger mosquito).